The primary structure comprises 335 residues: ATP-dependent 6-phosphofructokinase (335 aa).

Gly11 is an ATP binding site. Arg21–Arg25 contacts ADP. ATP-binding positions include Arg72–Tyr73 and Gly102–Ser105. Residue Asp103 participates in Mg(2+) binding. Thr125 to Asp127 provides a ligand contact to substrate. Asp127 serves as the catalytic Proton acceptor. Position 154 (Arg154) interacts with ADP. Residues Arg162 and Met169–Arg171 contribute to the substrate site. ADP contacts are provided by residues Gly185–Asp187 and Lys213–His215. Residues Glu222, Arg244, and His250 to Arg253 contribute to the substrate site.

It belongs to the phosphofructokinase type A (PFKA) family. ATP-dependent PFK group I subfamily. Prokaryotic clade 'B1' sub-subfamily. In terms of assembly, homotetramer. It depends on Mg(2+) as a cofactor.

It is found in the cytoplasm. It carries out the reaction beta-D-fructose 6-phosphate + ATP = beta-D-fructose 1,6-bisphosphate + ADP + H(+). It functions in the pathway carbohydrate degradation; glycolysis; D-glyceraldehyde 3-phosphate and glycerone phosphate from D-glucose: step 3/4. Allosterically activated by ADP and other diphosphonucleosides, and allosterically inhibited by phosphoenolpyruvate. Catalyzes the phosphorylation of D-fructose 6-phosphate to fructose 1,6-bisphosphate by ATP, the first committing step of glycolysis. In Streptococcus pneumoniae serotype 19F (strain G54), this protein is ATP-dependent 6-phosphofructokinase.